We begin with the raw amino-acid sequence, 266 residues long: Orotidine 5'-phosphate decarboxylase (266 aa).

Substrate is bound by residues Asp-37, 59–61 (KTH), 91–100 (DRKFADIGNT), Tyr-217, and Arg-235. The Proton donor role is filled by Lys-93.

Belongs to the OMP decarboxylase family.

The enzyme catalyses orotidine 5'-phosphate + H(+) = UMP + CO2. Its pathway is pyrimidine metabolism; UMP biosynthesis via de novo pathway; UMP from orotate: step 2/2. This chain is Orotidine 5'-phosphate decarboxylase (URA3), found in Cyberlindnera jadinii (Torula yeast).